A 287-amino-acid chain; its full sequence is UPF0098 protein AF_1698 (287 aa).

This sequence belongs to the UPF0098 family.

In Archaeoglobus fulgidus (strain ATCC 49558 / DSM 4304 / JCM 9628 / NBRC 100126 / VC-16), this protein is UPF0098 protein AF_1698.